A 580-amino-acid chain; its full sequence is Tricyclene synthase TPS4, chloroplastic (580 aa).

A chloroplast-targeting transit peptide spans 1 to 41 (MLLNSSFISLPSFFKSQELGRTNLLIHRNGSPLLCYATNTN). (2E)-geranyl diphosphate-binding residues include Arg296, Asp334, Asp338, Arg475, and Asn478. The Mg(2+) site is built by Asp334 and Asp338. Positions 334–338 (DDIYD) match the DDXXD motif motif. Mg(2+)-binding residues include Asn478, Thr482, and Glu486.

The protein belongs to the terpene synthase family. Tpsb subfamily. It depends on Mg(2+) as a cofactor. The cofactor is Mn(2+). Expressed in leaves.

The protein resides in the plastid. Its subcellular location is the chloroplast stroma. The enzyme catalyses (2E)-geranyl diphosphate = tricyclene + diphosphate. It carries out the reaction (2E)-geranyl diphosphate = (E)-beta-ocimene + diphosphate. The protein operates within secondary metabolite biosynthesis; terpenoid biosynthesis. Promotes the emission of terpenes volatile organic compounds (VOC) in response to damage mediated by arthropod herbivores (e.g. Spodoptera exigua), probably to attract natural enemies of the herbivores. This chain is Tricyclene synthase TPS4, chloroplastic (TPS4), found in Medicago truncatula (Barrel medic).